The chain runs to 554 residues: Condensin-2 complex subunit H2 (554 aa).

5 positions are modified to phosphoserine: Ser45, Ser178, Ser182, Ser199, and Ser200. Positions 154 to 296 are disordered; the sequence is PVDVHPMPRS…GQKRKRKGAT (143 aa). Polar residues predominate over residues 179–191; the sequence is RNGSPVSVRSISQ. Acidic residues predominate over residues 201 to 210; that stretch reads GDEDAEDVAE. Ser441 carries the post-translational modification Phosphoserine.

It belongs to the CND2 H2 (condensin-2 subunit 2) family. Component of the condensin-2 complex, which contains the SMC2 and SMC4 heterodimer, and three non SMC subunits, NCAPG2, NCAPH2 and NCAPD3 that probably regulate the complex.

Its subcellular location is the nucleus. In terms of biological role, regulatory subunit of the condensin-2 complex, a complex that seems to provide chromosomes with an additional level of organization and rigidity and in establishing mitotic chromosome architecture. May promote the resolution of double-strand DNA catenanes (intertwines) between sister chromatids. Condensin-mediated compaction likely increases tension in catenated sister chromatids, providing directionality for type II topoisomerase-mediated strand exchanges toward chromatid decatenation. Required for decatenation of chromatin bridges at anaphase. Early in neurogenesis, may play an essential role to ensure accurate mitotic chromosome condensation in neuron stem cells, ultimately affecting neuron pool and cortex size. Seems to have lineage-specific role in T-cell development. In Rattus norvegicus (Rat), this protein is Condensin-2 complex subunit H2 (Ncaph2).